Reading from the N-terminus, the 107-residue chain is Class I hydrophobin 3 (107 aa).

The first 18 residues, 1-18 (MQFKVLAALVIGATLAAA), serve as a signal peptide directing secretion. Disulfide bonds link Cys-26–Cys-86, Cys-33–Cys-80, Cys-34–Cys-67, and Cys-87–Cys-100. N-linked (GlcNAc...) asparagine glycans are attached at residues Asn-35 and Asn-89.

The protein belongs to the fungal hydrophobin family. In terms of assembly, self-assembles to form functional amyloid fibrils called rodlets. Self-assembly into fibrillar rodlets occurs spontaneously at hydrophobic:hydrophilic interfaces and the rodlets further associate laterally to form amphipathic monolayers.

The protein resides in the secreted. Its subcellular location is the cell wall. In terms of biological role, aerial growth, conidiation, and dispersal of filamentous fungi in the environment rely upon a capability of their secreting small amphipathic proteins called hydrophobins (HPBs) with low sequence identity. Class I can self-assemble into an outermost layer of rodlet bundles on aerial cell surfaces, conferring cellular hydrophobicity that supports fungal growth, development and dispersal; whereas Class II form highly ordered films at water-air interfaces through intermolecular interactions but contribute nothing to the rodlet structure. Pnh3 is a class I hydrophobin that might be involved in the attachment of the hydrophilic wall of hyphae to the hydrophobic surface of wood under inorganic phosphate (Pi)-deficient conditions and enable the mycelium to degrade efficiently the components of wood and to acquire nutrients containing Pi. This Pholiota nameko protein is Class I hydrophobin 3.